Reading from the N-terminus, the 247-residue chain is tRNA1(Val) (adenine(37)-N6)-methyltransferase (247 aa).

The protein belongs to the methyltransferase superfamily. tRNA (adenine-N(6)-)-methyltransferase family.

The protein resides in the cytoplasm. The catalysed reaction is adenosine(37) in tRNA1(Val) + S-adenosyl-L-methionine = N(6)-methyladenosine(37) in tRNA1(Val) + S-adenosyl-L-homocysteine + H(+). Its function is as follows. Specifically methylates the adenine in position 37 of tRNA(1)(Val) (anticodon cmo5UAC). The sequence is that of tRNA1(Val) (adenine(37)-N6)-methyltransferase from Edwardsiella ictaluri (strain 93-146).